The sequence spans 382 residues: Pyrimidine monooxygenase RutA (382 aa).

FMN-binding positions include 68 to 69 (IK), asparagine 134, glutamate 143, 159 to 160 (RY), and serine 209.

Belongs to the NtaA/SnaA/DszA monooxygenase family. RutA subfamily.

The catalysed reaction is uracil + FMNH2 + NADH + O2 = (Z)-3-ureidoacrylate + FMN + NAD(+) + H2O + H(+). It catalyses the reaction thymine + FMNH2 + NADH + O2 = (Z)-2-methylureidoacrylate + FMN + NAD(+) + H2O + H(+). Catalyzes the pyrimidine ring opening between N-3 and C-4 by an unusual flavin hydroperoxide-catalyzed mechanism, adding oxygen atoms in the process to yield ureidoacrylate peracid, that immediately reacts with FMN forming ureidoacrylate and FMN-N(5)-oxide. The FMN-N(5)-oxide reacts spontaneously with NADH to produce FMN. Requires the flavin reductase RutF to regenerate FMN in vivo. This is Pyrimidine monooxygenase RutA from Escherichia coli (strain B / BL21-DE3).